Reading from the N-terminus, the 321-residue chain is Glucokinase (321 aa).

ATP is bound at residue 8–13; that stretch reads GDVGGT.

This sequence belongs to the bacterial glucokinase family.

It localises to the cytoplasm. It carries out the reaction D-glucose + ATP = D-glucose 6-phosphate + ADP + H(+). The sequence is that of Glucokinase from Tolumonas auensis (strain DSM 9187 / NBRC 110442 / TA 4).